Consider the following 201-residue polypeptide: Probable nicotinate-nucleotide adenylyltransferase (201 aa).

This sequence belongs to the NadD family.

It carries out the reaction nicotinate beta-D-ribonucleotide + ATP + H(+) = deamido-NAD(+) + diphosphate. It participates in cofactor biosynthesis; NAD(+) biosynthesis; deamido-NAD(+) from nicotinate D-ribonucleotide: step 1/1. Functionally, catalyzes the reversible adenylation of nicotinate mononucleotide (NaMN) to nicotinic acid adenine dinucleotide (NaAD). This chain is Probable nicotinate-nucleotide adenylyltransferase, found in Neisseria gonorrhoeae (strain ATCC 700825 / FA 1090).